We begin with the raw amino-acid sequence, 371 residues long: Queuine tRNA-ribosyltransferase (371 aa).

Residue D90 is the Proton acceptor of the active site. Substrate-binding positions include 90–94, D144, Q189, and G215; that span reads DSGGF. The tract at residues 246-252 is RNA binding; the sequence is GVGTPEN. D265 (nucleophile) is an active-site residue. The segment at 270–274 is RNA binding; important for wobble base 34 recognition; that stretch reads TRNAR. 4 residues coordinate Zn(2+): C303, C305, C308, and H334.

It belongs to the queuine tRNA-ribosyltransferase family. As to quaternary structure, homodimer. Within each dimer, one monomer is responsible for RNA recognition and catalysis, while the other monomer binds to the replacement base PreQ1. It depends on Zn(2+) as a cofactor.

It catalyses the reaction 7-aminomethyl-7-carbaguanine + guanosine(34) in tRNA = 7-aminomethyl-7-carbaguanosine(34) in tRNA + guanine. The protein operates within tRNA modification; tRNA-queuosine biosynthesis. Functionally, catalyzes the base-exchange of a guanine (G) residue with the queuine precursor 7-aminomethyl-7-deazaguanine (PreQ1) at position 34 (anticodon wobble position) in tRNAs with GU(N) anticodons (tRNA-Asp, -Asn, -His and -Tyr). Catalysis occurs through a double-displacement mechanism. The nucleophile active site attacks the C1' of nucleotide 34 to detach the guanine base from the RNA, forming a covalent enzyme-RNA intermediate. The proton acceptor active site deprotonates the incoming PreQ1, allowing a nucleophilic attack on the C1' of the ribose to form the product. After dissociation, two additional enzymatic reactions on the tRNA convert PreQ1 to queuine (Q), resulting in the hypermodified nucleoside queuosine (7-(((4,5-cis-dihydroxy-2-cyclopenten-1-yl)amino)methyl)-7-deazaguanosine). In Helicobacter acinonychis (strain Sheeba), this protein is Queuine tRNA-ribosyltransferase.